The chain runs to 185 residues: Large ribosomal subunit protein uL5 (185 aa).

The protein belongs to the universal ribosomal protein uL5 family. In terms of assembly, part of the 50S ribosomal subunit; part of the 5S rRNA/L5/L18/L25 subcomplex. Contacts the 5S rRNA and the P site tRNA. Forms a bridge to the 30S subunit in the 70S ribosome.

This is one of the proteins that bind and probably mediate the attachment of the 5S RNA into the large ribosomal subunit, where it forms part of the central protuberance. In the 70S ribosome it contacts protein S13 of the 30S subunit (bridge B1b), connecting the 2 subunits; this bridge is implicated in subunit movement. Contacts the P site tRNA; the 5S rRNA and some of its associated proteins might help stabilize positioning of ribosome-bound tRNAs. The chain is Large ribosomal subunit protein uL5 from Afipia carboxidovorans (strain ATCC 49405 / DSM 1227 / KCTC 32145 / OM5) (Oligotropha carboxidovorans).